The sequence spans 483 residues: Protein disulfide-isomerase 5-3 (483 aa).

Residues Asn-53, Asn-74, and Asn-99 are each glycosylated (N-linked (GlcNAc...) asparagine). Positions 133–263 (EETKEEFPDG…IVKMVEGLVA (131 aa)) constitute a Thioredoxin domain. The Nucleophile role is filled by Cys-170. Asn-279, Asn-326, and Asn-376 each carry an N-linked (GlcNAc...) asparagine glycan. The helical transmembrane segment at 442 to 462 (FSHFITNLCAIIGGVFTVAGI) threads the bilayer.

The protein belongs to the protein disulfide isomerase family. As to expression, widely expressed.

It localises to the membrane. Acts as a protein-folding catalyst that interacts with nascent polypeptides to catalyze the formation, isomerization, and reduction or oxidation of disulfide bonds. The protein is Protein disulfide-isomerase 5-3 (PDIL5-3) of Arabidopsis thaliana (Mouse-ear cress).